Consider the following 878-residue polypeptide: Leucine--tRNA ligase (878 aa).

The 'HIGH' region motif lies at 43–53 (PYPSGRIHIGH). The 'KMSKS' region motif lies at 630–634 (KMSKS). Lysine 633 is a binding site for ATP.

The protein belongs to the class-I aminoacyl-tRNA synthetase family.

The protein resides in the cytoplasm. The catalysed reaction is tRNA(Leu) + L-leucine + ATP = L-leucyl-tRNA(Leu) + AMP + diphosphate. The sequence is that of Leucine--tRNA ligase from Nitrobacter hamburgensis (strain DSM 10229 / NCIMB 13809 / X14).